An 869-amino-acid polypeptide reads, in one-letter code: Kinesin-like protein KIN-10A (869 aa).

A compositionally biased stretch (polar residues) spans 1–36; that stretch reads MAPTPSSSRSNQTQYTLIRTPQTKQRLNFHSKTPNP. The segment at 1 to 50 is disordered; it reads MAPTPSSSRSNQTQYTLIRTPQTKQRLNFHSKTPNPDGSKDPSPPEHPVE. Residues 38–50 show a composition bias toward basic and acidic residues; sequence GSKDPSPPEHPVE. A Kinesin motor domain is found at 48–367; the sequence is PVEVIGRIRD…LEYGAKAKCI (320 aa). 129 to 136 is a binding site for ATP; the sequence is GPTGAGKS. Positions 393–515 form a coiled coil; it reads RIAAMDEFII…EIEVEFRRSN (123 aa).

This sequence belongs to the TRAFAC class myosin-kinesin ATPase superfamily. Kinesin family. KIN-10 subfamily. Binds microtubules.

It is found in the cytoplasm. The protein resides in the cytoskeleton. The protein localises to the phragmoplast. Probable plus end-directed motor protein that may contribute to the transport of Golgi-derived vesicles in the phragmoplast. The sequence is that of Kinesin-like protein KIN-10A from Arabidopsis thaliana (Mouse-ear cress).